We begin with the raw amino-acid sequence, 92 residues long: Small ribosomal subunit protein uS19c (92 aa).

It belongs to the universal ribosomal protein uS19 family.

It is found in the plastid. The protein localises to the chloroplast. In terms of biological role, protein S19 forms a complex with S13 that binds strongly to the 16S ribosomal RNA. The chain is Small ribosomal subunit protein uS19c from Psilotum nudum (Whisk fern).